Reading from the N-terminus, the 208-residue chain is Guanylate kinase (208 aa).

The Guanylate kinase-like domain occupies 4–185; that stretch reads GNLYIISAPS…ALVDLEHILR (182 aa). Position 11-18 (11-18) interacts with ATP; the sequence is APSGAGKS.

It belongs to the guanylate kinase family.

The protein localises to the cytoplasm. The catalysed reaction is GMP + ATP = GDP + ADP. Functionally, essential for recycling GMP and indirectly, cGMP. This chain is Guanylate kinase, found in Histophilus somni (strain 129Pt) (Haemophilus somnus).